Reading from the N-terminus, the 163-residue chain is MRRILSVLLENESGALSRVIGLFSQRGYNIESLTVAPTDDPTLSRMTIQTVGDEKVLEQIEKQLHKLVDVLRVSELGQGAHVEREIMLVKIQASGYGRDEVKRNTEIFRGQIIDVTPSLYTVQLAGTSGKLDAFLASIRDVAKIVEVARSGVVGLSRGDKIMR.

In terms of domain architecture, ACT spans 4–78 (ILSVLLENES…DVLRVSELGQ (75 aa)).

Belongs to the acetolactate synthase small subunit family. Dimer of large and small chains.

The catalysed reaction is 2 pyruvate + H(+) = (2S)-2-acetolactate + CO2. It functions in the pathway amino-acid biosynthesis; L-isoleucine biosynthesis; L-isoleucine from 2-oxobutanoate: step 1/4. The protein operates within amino-acid biosynthesis; L-valine biosynthesis; L-valine from pyruvate: step 1/4. Sensitive to valine inhibition. This chain is Acetolactate synthase isozyme 3 small subunit (ilvH), found in Escherichia coli (strain K12).